A 542-amino-acid polypeptide reads, in one-letter code: Zinc finger CCHC domain-containing protein 7 (542 aa).

The interval 110 to 144 (QAQEKTQSPATPRSNKVANKCKRSNKKPEPEESPS) is disordered. The span at 112 to 126 (QEKTQSPATPRSNKV) shows a compositional bias: polar residues. Glycyl lysine isopeptide (Lys-Gly) (interchain with G-Cter in SUMO2) cross-links involve residues lysine 129 and lysine 136. Serine 142 is subject to Phosphoserine. Glycyl lysine isopeptide (Lys-Gly) (interchain with G-Cter in SUMO2) cross-links involve residues lysine 236 and lysine 251. 3 CCHC-type zinc fingers span residues 238 to 255 (VTCRNCDKRGHLSKNCPL), 260 to 277 (RPCCLCSERGHLQYGCPA), and 301 to 318 (KRCDRCDMIGHYADACPE). Lysine 336 participates in a covalent cross-link: Glycyl lysine isopeptide (Lys-Gly) (interchain with G-Cter in SUMO2). Residues 345–362 (VYCYNCAQKGHYGHECTE) form a CCHC-type 4 zinc finger. Positions 396 to 542 (LKDIKKNGDF…RKKKPKSSGF (147 aa)) are disordered. A Glycyl lysine isopeptide (Lys-Gly) (interchain with G-Cter in SUMO2) cross-link involves residue lysine 410. Basic and acidic residues predominate over residues 412-421 (PHGEETDRYH). Over residues 422-435 (HDRRKSRFSGKRSR) the composition is skewed to basic residues. Lysine 432 is covalently cross-linked (Glycyl lysine isopeptide (Lys-Gly) (interchain with G-Cter in SUMO2)). A compositionally biased stretch (basic and acidic residues) spans 436 to 456 (WPRESKETQKEKTRGREGEKH). A Glycyl lysine isopeptide (Lys-Gly) (interchain with G-Cter in SUMO2) cross-link involves residue lysine 474. The span at 474 to 489 (KPNSSSSSNSQKPSKS) shows a compositional bias: low complexity. Phosphoserine occurs at positions 478 and 480. Glycyl lysine isopeptide (Lys-Gly) (interchain with G-Cter in SUMO2) cross-links involve residues lysine 485 and lysine 488. Basic and acidic residues-rich tracts occupy residues 499-510 (LREEKLRRESMR) and 518-528 (FVEDGSHDDLF). Lysine 531 is covalently cross-linked (Glycyl lysine isopeptide (Lys-Gly) (interchain with G-Cter in SUMO2)). Basic residues predominate over residues 531 to 542 (KQRKKKPKSSGF).

Component of a nucleolar TRAMP-like complex, an ATP-dependent exosome regulatory complex consisting of a helicase (MTREX), an oligadenylate polymerase (TENT4B or TENT4A), and a substrate specific RNA-binding factor (ZCCHC7 or ZCCHC8). Several TRAMP-like complexes exist with specific compositions and are associated with nuclear, or nucleolar RNA exosomes.

It localises to the nucleus. Its subcellular location is the nucleolus. This chain is Zinc finger CCHC domain-containing protein 7 (Zcchc7), found in Rattus norvegicus (Rat).